A 343-amino-acid polypeptide reads, in one-letter code: Follistatin (343 aa).

The first 28 residues, 1-28, serve as a signal peptide directing secretion; it reads MLNQRIHPGMLVLLMFLYHFMEDHTAQA. Positions 29–102 constitute a TB domain; that stretch reads GNCWLRQARN…TCENVDCGPG (74 aa). Disulfide bonds link C31–C54, C41–C87, C55–C90, C94–C105, C99–C115, C117–C149, C121–C142, and C131–C163. One can recognise a Follistatin-like 1 domain in the interval 93-116; the sequence is TCENVDCGPGKKCKMNKKNKPRCV. Kazal-like domains follow at residues 99–165, 185–240, and 263–317; these read CGPG…KCKK, NAYC…KCIK, and RGRC…SCNS. N123 is a glycosylation site (N-linked (GlcNAc...) asparagine). The Follistatin-like 2 domain occupies 166 to 189; it reads TCRDVLCPGSSTCVVDQTNNAYCV. 3 cysteine pairs are disulfide-bonded: C191/C224, C195/C217, and C206/C238. The Follistatin-like 3 domain occupies 243-267; sequence SCEDIQCSAGKKCLWDFKVGRGRCA. Cystine bridges form between C269–C301, C273–C294, and C283–C315. Residue N287 is glycosylated (N-linked (GlcNAc...) asparagine). The disordered stretch occupies residues 315 to 343; it reads CNSINEDPEEEEEDEDQDYSFPISSILEW. The segment covering 320 to 332 has biased composition (acidic residues); sequence EDPEEEEEDEDQD.

As to quaternary structure, monomer. In terms of tissue distribution, ciliary ganglion neurons. Levels are higher in the iris than the choroid.

It is found in the secreted. Functionally, binds directly to activin and functions as an activin antagonist. Inhibits activin A signaling in the iris and regulates somatostatin phenotype in ciliary ganglion neurons. Specific inhibitor of the biosynthesis and secretion of pituitary follicle stimulating hormone (FSH). This chain is Follistatin (FST), found in Gallus gallus (Chicken).